Consider the following 393-residue polypeptide: uncharacterized protein (393 aa).

The disordered stretch occupies residues 164–183; that stretch reads ASDPHPGKNSPASPTGENKE. The segment covering 173-183 has biased composition (polar residues); the sequence is SPASPTGENKE.

This is an uncharacterized protein from Treponema pallidum (strain Nichols).